A 124-amino-acid polypeptide reads, in one-letter code: 5-hydroxyisourate hydrolase (124 aa).

His-15, Arg-53, and Tyr-121 together coordinate substrate.

Belongs to the transthyretin family. 5-hydroxyisourate hydrolase subfamily. Homotetramer.

The enzyme catalyses 5-hydroxyisourate + H2O = 5-hydroxy-2-oxo-4-ureido-2,5-dihydro-1H-imidazole-5-carboxylate + H(+). Its function is as follows. Catalyzes the hydrolysis of 5-hydroxyisourate (HIU) to 2-oxo-4-hydroxy-4-carboxy-5-ureidoimidazoline (OHCU). The polypeptide is 5-hydroxyisourate hydrolase (Mesorhizobium japonicum (strain LMG 29417 / CECT 9101 / MAFF 303099) (Mesorhizobium loti (strain MAFF 303099))).